A 31-amino-acid polypeptide reads, in one-letter code: Cytochrome b6-f complex subunit 6 (31 aa).

Residues 3–23 (IITSYFGFLLTALTIASALFI) traverse the membrane as a helical segment.

Belongs to the PetL family. In terms of assembly, the 4 large subunits of the cytochrome b6-f complex are cytochrome b6, subunit IV (17 kDa polypeptide, PetD), cytochrome f and the Rieske protein, while the 4 small subunits are PetG, PetL, PetM and PetN. The complex functions as a dimer.

The protein resides in the plastid. Its subcellular location is the chloroplast thylakoid membrane. In terms of biological role, component of the cytochrome b6-f complex, which mediates electron transfer between photosystem II (PSII) and photosystem I (PSI), cyclic electron flow around PSI, and state transitions. PetL is important for photoautotrophic growth as well as for electron transfer efficiency and stability of the cytochrome b6-f complex. The protein is Cytochrome b6-f complex subunit 6 of Helianthus annuus (Common sunflower).